A 423-amino-acid chain; its full sequence is ATP-citrate synthase alpha chain protein 1 (423 aa).

N343, T345, and R376 together coordinate citrate.

This sequence belongs to the succinate/malate CoA ligase beta subunit family. As to quaternary structure, heterooctamer of 4 alpha and 4 beta chains. In terms of tissue distribution, expressed in trichomes, epidermal leaf cells, anther tapetal cells, stigma and in young vascular bundles of expanding leaves, cotyledons, roots, pedicel of flowers and siliques.

Its subcellular location is the cytoplasm. It is found in the cytosol. It carries out the reaction oxaloacetate + acetyl-CoA + ADP + phosphate = citrate + ATP + CoA. Its function is as follows. ATP citrate-lyase is the primary enzyme responsible for the synthesis of cytosolic acetyl-CoA, used for the elongation of fatty acids and biosynthesis of isoprenoids, flavonoids and malonated derivatives. May supply substrate to the cytosolic acetyl-CoA carboxylase, which generates the malonyl-CoA used for the synthesis of a multitude of compounds, including very long chain fatty acids and flavonoids. Required for normal growth and development and elongation of C18 fatty acids to C20 to C24 fatty acids in seeds. In contrast to all known animal ACL enzymes having a homomeric structure, plant ACLs are composed of alpha and beta chains. In Arabidopsis thaliana (Mouse-ear cress), this protein is ATP-citrate synthase alpha chain protein 1 (ACLA-1).